The chain runs to 272 residues: S-adenosylmethionine decarboxylase proenzyme (272 aa).

Catalysis depends on Ser-117, which acts as the Schiff-base intermediate with substrate; via pyruvic acid. Pyruvic acid (Ser); by autocatalysis is present on Ser-117. Residue His-122 is the Proton acceptor; for processing activity of the active site. Residue Cys-145 is the Proton donor; for catalytic activity of the active site.

Belongs to the prokaryotic AdoMetDC family. Type 2 subfamily. Heterooctamer of four alpha and four beta chains arranged as a tetramer of alpha/beta heterodimers. It depends on pyruvate as a cofactor. Post-translationally, is synthesized initially as an inactive proenzyme. Formation of the active enzyme involves a self-maturation process in which the active site pyruvoyl group is generated from an internal serine residue via an autocatalytic post-translational modification. Two non-identical subunits are generated from the proenzyme in this reaction, and the pyruvate is formed at the N-terminus of the alpha chain, which is derived from the carboxyl end of the proenzyme. The post-translation cleavage follows an unusual pathway, termed non-hydrolytic serinolysis, in which the side chain hydroxyl group of the serine supplies its oxygen atom to form the C-terminus of the beta chain, while the remainder of the serine residue undergoes an oxidative deamination to produce ammonia and the pyruvoyl group blocking the N-terminus of the alpha chain.

It carries out the reaction S-adenosyl-L-methionine + H(+) = S-adenosyl 3-(methylsulfanyl)propylamine + CO2. It participates in amine and polyamine biosynthesis; S-adenosylmethioninamine biosynthesis; S-adenosylmethioninamine from S-adenosyl-L-methionine: step 1/1. Catalyzes the decarboxylation of S-adenosylmethionine to S-adenosylmethioninamine (dcAdoMet), the propylamine donor required for the synthesis of the polyamines spermine and spermidine from the diamine putrescine. This chain is S-adenosylmethionine decarboxylase proenzyme, found in Halorhodospira halophila (strain DSM 244 / SL1) (Ectothiorhodospira halophila (strain DSM 244 / SL1)).